Here is a 500-residue protein sequence, read N- to C-terminus: UDP-GalNAc:beta-1,3-N-acetylgalactosaminyltransferase 2 (500 aa).

Residues 1–6 (MRNWLV) lie on the Cytoplasmic side of the membrane. Residues 7–23 (LLCPCVLGAALHLWLRL) form a helical; Signal-anchor for type II membrane protein membrane-spanning segment. At 24–500 (RSPPPACASG…CGDPCRCQAR (477 aa)) the chain is on the lumenal side. N-linked (GlcNAc...) asparagine glycans are attached at residues N116 and N174.

This sequence belongs to the glycosyltransferase 31 family. N-glycosylated. In terms of tissue distribution, expressed in all tissues examined, but at highest levels in testis, adipose tissue, skeletal muscle and ovary.

It localises to the golgi apparatus membrane. The protein localises to the endoplasmic reticulum. The enzyme catalyses 3-O-(N-acetyl-beta-D-glucosaminyl-(1-&gt;4)-alpha-D-mannosyl)-L-threonyl-[protein] + UDP-N-acetyl-alpha-D-galactosamine = 3-O-[beta-D-GalNAc-(1-&gt;3)-beta-D-GlcNAc-(1-&gt;4)-alpha-D-Man]-L-Thr-[protein] + UDP + H(+). The protein operates within protein modification; protein glycosylation. In terms of biological role, beta-1,3-N-acetylgalactosaminyltransferase that synthesizes a unique carbohydrate structure, GalNAc-beta-1-3GlcNAc, on N- and O-glycans. Has no galactose nor galactosaminyl transferase activity toward any acceptor substrate. Involved in alpha-dystroglycan (DAG1) glycosylation: acts coordinately with GTDC2/POMGnT2 to synthesize a GalNAc-beta3-GlcNAc-beta-terminus at the 4-position of protein O-mannose in the biosynthesis of the phosphorylated O-mannosyl trisaccharide (N-acetylgalactosamine-beta-3-N-acetylglucosamine-beta-4-(phosphate-6-)mannose), a carbohydrate structure present in alpha-dystroglycan, which is required for binding laminin G-like domain-containing extracellular proteins with high affinity. The chain is UDP-GalNAc:beta-1,3-N-acetylgalactosaminyltransferase 2 (B3GALNT2) from Homo sapiens (Human).